Reading from the N-terminus, the 380-residue chain is Cytochrome b (380 aa).

4 consecutive transmembrane segments (helical) span residues Phe-34–Ala-54, Trp-78–Val-99, Trp-114–Leu-134, and Phe-179–Thr-199. Heme b-binding residues include His-84 and His-98. Positions 183 and 197 each coordinate heme b. His-202 contacts a ubiquinone. Transmembrane regions (helical) follow at residues Leu-227 to Ser-247, Leu-289 to His-309, Leu-321 to Ser-341, and Phe-348 to Pro-368.

It belongs to the cytochrome b family. The cytochrome bc1 complex contains 11 subunits: 3 respiratory subunits (MT-CYB, CYC1 and UQCRFS1), 2 core proteins (UQCRC1 and UQCRC2) and 6 low-molecular weight proteins (UQCRH/QCR6, UQCRB/QCR7, UQCRQ/QCR8, UQCR10/QCR9, UQCR11/QCR10 and a cleavage product of UQCRFS1). This cytochrome bc1 complex then forms a dimer. Heme b serves as cofactor.

It localises to the mitochondrion inner membrane. Functionally, component of the ubiquinol-cytochrome c reductase complex (complex III or cytochrome b-c1 complex) that is part of the mitochondrial respiratory chain. The b-c1 complex mediates electron transfer from ubiquinol to cytochrome c. Contributes to the generation of a proton gradient across the mitochondrial membrane that is then used for ATP synthesis. This is Cytochrome b (MT-CYB) from Balearica pavonina (Black crowned-crane).